The following is a 183-amino-acid chain: MQTKKNEIWVGIFLLAALLAALFVCLKAANVTSIRTEPTYTLYATFDNIGGLKARSPVSIGGVVVGRVADITLDPKTYLPRVTLEIEQRYNHIPDTSSLSIRTSGLLGEQYLALNVGFEDPELGTAILKDGDTIQDTKSAMVLEDLIGQFLYGSKGDDNKNSGDAPAAAPGNNETTEPVGTTK.

Topologically, residues 1-7 are cytoplasmic; sequence MQTKKNE. Residues 8–28 form a helical; Signal-anchor for type II membrane protein membrane-spanning segment; the sequence is IWVGIFLLAALLAALFVCLKA. The Periplasmic portion of the chain corresponds to 29–183; it reads ANVTSIRTEP…ETTEPVGTTK (155 aa). The MCE/MlaD stretch occupies residues 39 to 116; sequence TYTLYATFDN…LGEQYLALNV (78 aa). The tract at residues 155 to 183 is disordered; the sequence is KGDDNKNSGDAPAAAPGNNETTEPVGTTK. Positions 172-183 are enriched in polar residues; sequence NNETTEPVGTTK.

This sequence belongs to the MlaD family. As to quaternary structure, the complex is composed of two ATP-binding proteins (MlaF), two transmembrane proteins (MlaE), two cytoplasmic solute-binding proteins (MlaB) and six periplasmic solute-binding proteins (MlaD).

It localises to the cell inner membrane. Its function is as follows. Part of the ABC transporter complex MlaFEDB, which is involved in a phospholipid transport pathway that maintains lipid asymmetry in the outer membrane by retrograde trafficking of phospholipids from the outer membrane to the inner membrane. MlaD functions in substrate binding with strong affinity for phospholipids and modulates ATP hydrolytic activity of the complex. In Escherichia coli O157:H7, this protein is Intermembrane phospholipid transport system binding protein MlaD.